The following is a 267-amino-acid chain: Protein BMH1 (267 aa).

Position 2 is an N-acetylserine (serine 2). A Glycyl lysine isopeptide (Lys-Gly) (interchain with G-Cter in ubiquitin) cross-link involves residue lysine 76. Residue serine 89 is modified to Phosphoserine. The segment at 236-267 is disordered; it reads DMSESGQAEDQQQQQQHQQQQPPAAAEGEAPK. The segment covering 243–267 has biased composition (low complexity); sequence AEDQQQQQQHQQQQPPAAAEGEAPK.

It belongs to the 14-3-3 family. As to quaternary structure, homodimer. Interacts with NTH1 (via N-terminus when phosphorylated by PKA); the interaction is direct and activates NTH1. Interacts with FIN1.

Functionally, involved in growth regulation. This is Protein BMH1 (BMH1) from Saccharomyces cerevisiae (strain ATCC 204508 / S288c) (Baker's yeast).